The following is a 167-amino-acid chain: Ubiquitin-fold modifier-conjugating enzyme 1 (167 aa).

Cysteine 116 (glycyl thioester intermediate) is an active-site residue. Lysine 122 is covalently cross-linked (Glycyl lysine isopeptide (Lys-Gly) (interchain with G-Cter in UFM1)).

The protein belongs to the ubiquitin-conjugating enzyme family. UFC1 subfamily. Interacts with UBA5 (via C-terminus). Interacts with UFL1. Interacts with UFM1. Interacts with KIRREL3. In terms of processing, ufmylated at Lys-122. Deufmylated by UFSP1.

Functionally, E2-like enzyme which specifically catalyzes the second step in ufmylation. Accepts the ubiquitin-like modifier UFM1 from the E1 enzyme UBA5 and forms an intermediate with UFM1 via a thioester linkage. Ufmylation is involved in various processes, such as ribosome recycling, response to DNA damage, interferon response or reticulophagy (also called ER-phagy). This is Ubiquitin-fold modifier-conjugating enzyme 1 from Bos taurus (Bovine).